The sequence spans 205 residues: ATP-dependent Clp protease proteolytic subunit (205 aa).

The active-site Nucleophile is S109. Residue H134 is part of the active site.

The protein belongs to the peptidase S14 family. As to quaternary structure, fourteen ClpP subunits assemble into 2 heptameric rings which stack back to back to give a disk-like structure with a central cavity, resembling the structure of eukaryotic proteasomes.

The protein localises to the cytoplasm. The catalysed reaction is Hydrolysis of proteins to small peptides in the presence of ATP and magnesium. alpha-casein is the usual test substrate. In the absence of ATP, only oligopeptides shorter than five residues are hydrolyzed (such as succinyl-Leu-Tyr-|-NHMec, and Leu-Tyr-Leu-|-Tyr-Trp, in which cleavage of the -Tyr-|-Leu- and -Tyr-|-Trp bonds also occurs).. Its function is as follows. Cleaves peptides in various proteins in a process that requires ATP hydrolysis. Has a chymotrypsin-like activity. Plays a major role in the degradation of misfolded proteins. The polypeptide is ATP-dependent Clp protease proteolytic subunit (Baumannia cicadellinicola subsp. Homalodisca coagulata).